The following is a 243-amino-acid chain: Segregation and condensation protein A (243 aa).

Belongs to the ScpA family. Component of a cohesin-like complex composed of ScpA, ScpB and the Smc homodimer, in which ScpA and ScpB bind to the head domain of Smc. The presence of the three proteins is required for the association of the complex with DNA.

The protein localises to the cytoplasm. Functionally, participates in chromosomal partition during cell division. May act via the formation of a condensin-like complex containing Smc and ScpB that pull DNA away from mid-cell into both cell halves. This Thermoanaerobacter pseudethanolicus (strain ATCC 33223 / 39E) (Clostridium thermohydrosulfuricum) protein is Segregation and condensation protein A.